We begin with the raw amino-acid sequence, 454 residues long: tRNA modification GTPase MnmE (454 aa).

(6S)-5-formyl-5,6,7,8-tetrahydrofolate is bound by residues arginine 23, glutamate 80, and lysine 120. Residues 216–377 (GMKVVIAGRP…LRNHLKQSMG (162 aa)) enclose the TrmE-type G domain. Asparagine 226 lines the K(+) pocket. GTP-binding positions include 226–231 (NAGKSS), 245–251 (TDIAGTT), 270–273 (DTAG), 335–338 (NKAD), and 358–360 (SAR). Mg(2+) is bound at residue serine 230. K(+) is bound by residues threonine 245, isoleucine 247, and threonine 250. Threonine 251 contacts Mg(2+). (6S)-5-formyl-5,6,7,8-tetrahydrofolate is bound at residue lysine 454.

It belongs to the TRAFAC class TrmE-Era-EngA-EngB-Septin-like GTPase superfamily. TrmE GTPase family. In terms of assembly, homodimer. Heterotetramer of two MnmE and two MnmG subunits. The cofactor is K(+).

It is found in the cytoplasm. Functionally, exhibits a very high intrinsic GTPase hydrolysis rate. Involved in the addition of a carboxymethylaminomethyl (cmnm) group at the wobble position (U34) of certain tRNAs, forming tRNA-cmnm(5)s(2)U34. The polypeptide is tRNA modification GTPase MnmE (Escherichia coli O17:K52:H18 (strain UMN026 / ExPEC)).